A 194-amino-acid polypeptide reads, in one-letter code: Ion-translocating oxidoreductase complex subunit A (194 aa).

6 helical membrane passes run 4 to 24, 39 to 59, 71 to 91, 102 to 122, 131 to 151, and 172 to 192; these read LVLI…QFLG, IGLS…SYLV, FLRT…TEMV, VLGI…VALL, FITA…VLVL, and AIGM…AGLI.

The protein belongs to the NqrDE/RnfAE family. The complex is composed of six subunits: RnfA, RnfB, RnfC, RnfD, RnfE and RnfG.

The protein resides in the cell inner membrane. Functionally, part of a membrane-bound complex that couples electron transfer with translocation of ions across the membrane. This chain is Ion-translocating oxidoreductase complex subunit A, found in Ectopseudomonas mendocina (strain ymp) (Pseudomonas mendocina).